The primary structure comprises 444 residues: Phosphoglucosamine mutase (444 aa).

Residue serine 102 is the Phosphoserine intermediate of the active site. Residues serine 102, aspartate 241, aspartate 243, and aspartate 245 each contribute to the Mg(2+) site. Phosphoserine is present on serine 102.

Belongs to the phosphohexose mutase family. It depends on Mg(2+) as a cofactor. In terms of processing, activated by phosphorylation.

It catalyses the reaction alpha-D-glucosamine 1-phosphate = D-glucosamine 6-phosphate. Functionally, catalyzes the conversion of glucosamine-6-phosphate to glucosamine-1-phosphate. This Haemophilus ducreyi (strain 35000HP / ATCC 700724) protein is Phosphoglucosamine mutase.